The primary structure comprises 357 residues: tRNA-specific 2-thiouridylase MnmA (357 aa).

ATP contacts are provided by residues 8 to 15 (GISGGVDS) and I34. C96 acts as the Nucleophile in catalysis. A disulfide bridge connects residues C96 and C192. An ATP-binding site is contributed by G120. An interaction with tRNA region spans residues 142–144 (KDQ). C192 (cysteine persulfide intermediate) is an active-site residue. Positions 301–302 (RY) are interaction with tRNA.

This sequence belongs to the MnmA/TRMU family.

The protein resides in the cytoplasm. It catalyses the reaction S-sulfanyl-L-cysteinyl-[protein] + uridine(34) in tRNA + AH2 + ATP = 2-thiouridine(34) in tRNA + L-cysteinyl-[protein] + A + AMP + diphosphate + H(+). In terms of biological role, catalyzes the 2-thiolation of uridine at the wobble position (U34) of tRNA, leading to the formation of s(2)U34. This Chlorobium phaeobacteroides (strain DSM 266 / SMG 266 / 2430) protein is tRNA-specific 2-thiouridylase MnmA.